We begin with the raw amino-acid sequence, 260 residues long: Carbonic anhydrase 3 (260 aa).

Ala-2 carries the post-translational modification N-acetylalanine. One can recognise an Alpha-carbonic anhydrase domain in the interval 3-259 (KEWGYASHNG…IKGRVVRASF (257 aa)). A phosphoserine mark is found at Ser-29, Ser-43, Ser-48, Ser-50, and Ser-55. The segment at 64–67 (KTCR) is involved in proton transfer. Phosphothreonine is present on Thr-73. Zn(2+) is bound by residues His-94, His-96, and His-119. A Phosphotyrosine modification is found at Tyr-127. Thr-129 bears the Phosphothreonine mark. Cys-182 and Cys-187 each carry S-glutathionyl cysteine. 198 to 199 (TT) contacts substrate. Thr-216 bears the Phosphothreonine mark. At Ser-219 the chain carries Phosphoserine.

This sequence belongs to the alpha-carbonic anhydrase family. It depends on Zn(2+) as a cofactor. S-thiolated both by thiol-disulfide exchange with glutathione disulfide and by oxyradical-initiated S-thiolation with reduced glutathione. Post-translationally, S-glutathionylated in hepatocytes under oxidative stress. As to expression, expressed in liver and muscle.

The protein resides in the cytoplasm. It catalyses the reaction hydrogencarbonate + H(+) = CO2 + H2O. Inhibited by acetazolamide. In terms of biological role, reversible hydration of carbon dioxide. This chain is Carbonic anhydrase 3 (Ca3), found in Rattus norvegicus (Rat).